Reading from the N-terminus, the 246-residue chain is 3-deoxy-manno-octulosonate cytidylyltransferase (246 aa).

This sequence belongs to the KdsB family.

The protein resides in the cytoplasm. It carries out the reaction 3-deoxy-alpha-D-manno-oct-2-ulosonate + CTP = CMP-3-deoxy-beta-D-manno-octulosonate + diphosphate. It participates in nucleotide-sugar biosynthesis; CMP-3-deoxy-D-manno-octulosonate biosynthesis; CMP-3-deoxy-D-manno-octulosonate from 3-deoxy-D-manno-octulosonate and CTP: step 1/1. Its pathway is bacterial outer membrane biogenesis; lipopolysaccharide biosynthesis. Its function is as follows. Activates KDO (a required 8-carbon sugar) for incorporation into bacterial lipopolysaccharide in Gram-negative bacteria. The polypeptide is 3-deoxy-manno-octulosonate cytidylyltransferase (Bradyrhizobium sp. (strain BTAi1 / ATCC BAA-1182)).